Consider the following 345-residue polypeptide: Holliday junction branch migration complex subunit RuvB (345 aa).

The tract at residues 1–182 is large ATPase domain (RuvB-L); that stretch reads MDQRIIASSS…FGIVQRLEFY (182 aa). ATP-binding positions include Ile-21, Arg-22, Gly-63, Lys-66, Thr-67, Thr-68, 129 to 131, Arg-172, Tyr-182, and Arg-219; that span reads EDF. Thr-67 is a binding site for Mg(2+). Positions 183–253 are small ATPAse domain (RuvB-S); it reads SPQELTRIVI…VAQAAMQMLK (71 aa). The interval 256 to 345 is head domain (RuvB-H); that stretch reads PEGFDELDRR…PGIGEPGDLF (90 aa). Residues Arg-292, Arg-311, and Arg-316 each coordinate DNA.

It belongs to the RuvB family. As to quaternary structure, homohexamer. Forms an RuvA(8)-RuvB(12)-Holliday junction (HJ) complex. HJ DNA is sandwiched between 2 RuvA tetramers; dsDNA enters through RuvA and exits via RuvB. An RuvB hexamer assembles on each DNA strand where it exits the tetramer. Each RuvB hexamer is contacted by two RuvA subunits (via domain III) on 2 adjacent RuvB subunits; this complex drives branch migration. In the full resolvosome a probable DNA-RuvA(4)-RuvB(12)-RuvC(2) complex forms which resolves the HJ.

The protein localises to the cytoplasm. The catalysed reaction is ATP + H2O = ADP + phosphate + H(+). Its function is as follows. The RuvA-RuvB-RuvC complex processes Holliday junction (HJ) DNA during genetic recombination and DNA repair, while the RuvA-RuvB complex plays an important role in the rescue of blocked DNA replication forks via replication fork reversal (RFR). RuvA specifically binds to HJ cruciform DNA, conferring on it an open structure. The RuvB hexamer acts as an ATP-dependent pump, pulling dsDNA into and through the RuvAB complex. RuvB forms 2 homohexamers on either side of HJ DNA bound by 1 or 2 RuvA tetramers; 4 subunits per hexamer contact DNA at a time. Coordinated motions by a converter formed by DNA-disengaged RuvB subunits stimulates ATP hydrolysis and nucleotide exchange. Immobilization of the converter enables RuvB to convert the ATP-contained energy into a lever motion, pulling 2 nucleotides of DNA out of the RuvA tetramer per ATP hydrolyzed, thus driving DNA branch migration. The RuvB motors rotate together with the DNA substrate, which together with the progressing nucleotide cycle form the mechanistic basis for DNA recombination by continuous HJ branch migration. Branch migration allows RuvC to scan DNA until it finds its consensus sequence, where it cleaves and resolves cruciform DNA. The sequence is that of Holliday junction branch migration complex subunit RuvB from Xanthomonas oryzae pv. oryzae (strain MAFF 311018).